The primary structure comprises 847 residues: Bifunctional protein argC, mitochondrial (847 aa).

Residues 100–331 (QIVLVKIGGG…PPSTSITITS (232 aa)) form an acetylglutamate kinase region. An N-acetyltransferase domain is found at 352-508 (GEVMHSHESP…CLSQSSTYLS (157 aa)). Residues 531–846 (FRVGLIGARG…LDELASIKNE (316 aa)) form an N-acetyl-gamma-glutamyl-phosphate reductase region. Residue C665 is part of the active site.

In the N-terminal section; belongs to the acetylglutamate kinase family. This sequence in the C-terminal section; belongs to the NAGSA dehydrogenase family.

It localises to the mitochondrion. It catalyses the reaction N-acetyl-L-glutamate 5-semialdehyde + phosphate + NADP(+) = N-acetyl-L-glutamyl 5-phosphate + NADPH + H(+). It carries out the reaction N-acetyl-L-glutamate + ATP = N-acetyl-L-glutamyl 5-phosphate + ADP. Its pathway is amino-acid biosynthesis; L-arginine biosynthesis; N(2)-acetyl-L-ornithine from L-glutamate: step 2/4. It functions in the pathway amino-acid biosynthesis; L-arginine biosynthesis; N(2)-acetyl-L-ornithine from L-glutamate: step 3/4. This Dictyostelium discoideum (Social amoeba) protein is Bifunctional protein argC, mitochondrial (argC).